Consider the following 352-residue polypeptide: Bifunctional protein FolD 1, mitochondrial (352 aa).

A mitochondrion-targeting transit peptide spans 1–23 (MLMIARKALASAHTKAFRLATRD).

The protein belongs to the tetrahydrofolate dehydrogenase/cyclohydrolase family. In terms of assembly, homodimer.

The protein localises to the mitochondrion. It carries out the reaction (6R)-5,10-methylene-5,6,7,8-tetrahydrofolate + NADP(+) = (6R)-5,10-methenyltetrahydrofolate + NADPH. The catalysed reaction is (6R)-5,10-methenyltetrahydrofolate + H2O = (6R)-10-formyltetrahydrofolate + H(+). It participates in one-carbon metabolism; tetrahydrofolate interconversion. Catalyzes the oxidation of 5,10-methylenetetrahydrofolate to 5,10-methenyltetrahydrofolate and then the hydrolysis of 5,10-methenyltetrahydrofolate to 10-formyltetrahydrofolate. This Arabidopsis thaliana (Mouse-ear cress) protein is Bifunctional protein FolD 1, mitochondrial (FOLD1).